Reading from the N-terminus, the 132-residue chain is Holo-[acyl-carrier-protein] synthase (132 aa).

Residues Asp8 and Glu62 each coordinate Mg(2+).

Belongs to the P-Pant transferase superfamily. AcpS family. Mg(2+) serves as cofactor.

It localises to the cytoplasm. It catalyses the reaction apo-[ACP] + CoA = holo-[ACP] + adenosine 3',5'-bisphosphate + H(+). Its function is as follows. Transfers the 4'-phosphopantetheine moiety from coenzyme A to a Ser of acyl-carrier-protein. This is Holo-[acyl-carrier-protein] synthase from Methylibium petroleiphilum (strain ATCC BAA-1232 / LMG 22953 / PM1).